Here is a 146-residue protein sequence, read N- to C-terminus: Linear conopeptide (146 aa).

The N-terminal stretch at 1–19 is a signal peptide; it reads MLRLIIAAAVLVSACLAYP. The propeptide occupies 20–34; the sequence is QRREGAPADAANLQS. M40 carries the post-translational modification Methionine sulfoxide; partial; in Cn2. 2 propeptides span residues 58–80 and 104–146; these read FLPFNPNLQMGYKRDFDENLEKR and FLHN…DKEQ. A disordered region spans residues 107 to 146; the sequence is NEKGDKHPFANVDSADTDLGQFEPSAENKNGEFRFFDKEQ. Residues 135–146 show a composition bias toward basic and acidic residues; sequence KNGEFRFFDKEQ.

Expressed by the venom duct.

It localises to the secreted. This is Linear conopeptide from Conus consors (Singed cone).